The chain runs to 739 residues: MDSRPQKVWMTPSLTESDMDYHKILTAGLSVQQGIVRQRVIPVYQVNNLEEICQLIIQAFEAGVDFQESADSFLLMLCLHHAYQGDYKLFLESGAVKYLEGHGFRFEVKKRDGVKRLEELLPAVSSGKNIKRTLAAMPEEETTEANAGQFLSFASLFLPKLVVGEKACLRKVQRQIQVHAEQGLIQYPTAWQSVGHMMVIFRLMRTNFLIKFLLIHQGMHMVAGHDANDAVISNSVAQARFSGLLIVKTVLDHILQKTQRGVRLHPLARTAKVKNEVNSLKAALSSLAKHGEYAPFARLLNLSGVNNLEHGLFPQLSAIALGVATAHGSTLAGVNVGEQYQQLREAATEAEKQLQQYAESRELDHLGLDDQEKKILMNFHQKKNEISFQQTNAMVTLKKERLAKLTEAITAASLPKTSGHYDDDDDIPFPGPINDDDNPGHQDDDPTDSQDTTIPDVVVDPDDGSYGEYQSYSENGMNAPDDLVLFDLDEDDEDTKPVPNRSTKGGQQKNSQKGQHTEGRQTQSRPTQNIPGPHRTIHHASAPLTDNDRRNEPSGSTSPRMLTPINEEADPLDDADDETSSLPPLESDDEEQDRDGTSNRTPTVAPPAPVYRDHSEKKELPQDERQDQDHTQEARNQDSDNTQPEHSFEEMYRHILRSQGPFDAVLYYHMMKDEPVVFSTSDGKEYTYPDSLEEEYPPWLTEKEAMNEENTFVTLDGQQFYWPVMNHKDKFMAILQHHQ.

Residues 334-363 adopt a coiled-coil conformation; that stretch reads VNVGEQYQQLREAATEAEKQLQQYAESREL. Residues 415 to 646 are disordered; that stretch reads PKTSGHYDDD…QDSDNTQPEH (232 aa). 2 stretches are compositionally biased toward low complexity: residues 449–458 and 504–514; these read SQDTTIPDVV and KGGQQKNSQKG. Over residues 520 to 530 the composition is skewed to polar residues; it reads RQTQSRPTQNI. The segment covering 567-579 has biased composition (acidic residues); the sequence is EEADPLDDADDET. The span at 611–638 shows a compositional bias: basic and acidic residues; it reads YRDHSEKKELPQDERQDQDHTQEARNQD.

It belongs to the filoviruses nucleoprotein family. As to quaternary structure, homooligomer. Homomultimerizes to form the nucleocapsid. Binds to viral genomic RNA. Interacts with VP35 and VP30 to form the nucleocapsid. Interacts with host PPP2R5C; this interaction leads to VP30 dephosphorylation and viral transcription. Interacts with VP24; this interaction facilitates nucleocapsid assembly and genome packaging. Interacts with matrix protein VP40; this interaction allows recruitment of the nucleocapsid into progeny virions. Interacts with host STAU1. Interacts with host NXF1 (via RNA-binding domain); this interaction recruits NXF1 to the inclusion bodies were viral replication takes place, probably to export viral mRNA-NXF1 complexes from these sites. Interacts with host CCDC92; this interaction sequesters NP in the host cytoplasm. Interacts with host TRIM14. In terms of processing, phosphorylated and O-glycosylated by host. Acetylated by host EP300 in vitro.

It localises to the virion. It is found in the host cytoplasm. In terms of biological role, oligomerizes into helical capsid to encapsidate the viral genome, protecting it from nucleases and the cellular innate immune response. VP35 binds to and stabilizes monomeric NP, keeping it soluble. Upon virus replication, NP is recruited to bind cooperatively viral genomic RNA and VP35 is released. The encapsidated genomic RNA is termed the nucleocapsid and serves as template for transcription and replication. The nucleocapsid is helical with a pitch of 10.81 NP per turn and a diameter of about 22nm. Each NP binds to six nucleotides of viral genomic RNA, three being exposed to the solvant and three hidden into the nucleocapsid. Also recruits host PPP2R5C phosphatase to dephosphorylate VP30 and thereby promote viral transcription. Upon virion assembly and budding, NP binds to VP24 and possibly host STAU1. The chain is Nucleoprotein (NP) from Zaire ebolavirus (strain Gabon-94) (ZEBOV).